Consider the following 454-residue polypeptide: Bifunctional protein GlmU (454 aa).

Residues 1–227 (MTQLSVVILA…FMEVEGANNR (227 aa)) are pyrophosphorylase. UDP-N-acetyl-alpha-D-glucosamine-binding positions include 9 to 12 (LAAG), lysine 23, glutamine 74, 79 to 80 (GT), 101 to 103 (YGD), glycine 138, glutamate 152, asparagine 167, and asparagine 225. Aspartate 103 contributes to the Mg(2+) binding site. Asparagine 225 is a binding site for Mg(2+). Residues 228-248 (LQLAALERFYQKTQAEKLLLA) form a linker region. The interval 249-454 (GVRLIDPARF…QGWQRPTKKK (206 aa)) is N-acetyltransferase. Positions 331 and 349 each coordinate UDP-N-acetyl-alpha-D-glucosamine. Catalysis depends on histidine 361, which acts as the Proton acceptor. Residues tyrosine 364 and asparagine 375 each contribute to the UDP-N-acetyl-alpha-D-glucosamine site. Acetyl-CoA is bound by residues alanine 378, 384–385 (NY), serine 403, alanine 421, and arginine 438.

This sequence in the N-terminal section; belongs to the N-acetylglucosamine-1-phosphate uridyltransferase family. The protein in the C-terminal section; belongs to the transferase hexapeptide repeat family. In terms of assembly, homotrimer. It depends on Mg(2+) as a cofactor.

It localises to the cytoplasm. The catalysed reaction is alpha-D-glucosamine 1-phosphate + acetyl-CoA = N-acetyl-alpha-D-glucosamine 1-phosphate + CoA + H(+). The enzyme catalyses N-acetyl-alpha-D-glucosamine 1-phosphate + UTP + H(+) = UDP-N-acetyl-alpha-D-glucosamine + diphosphate. It participates in nucleotide-sugar biosynthesis; UDP-N-acetyl-alpha-D-glucosamine biosynthesis; N-acetyl-alpha-D-glucosamine 1-phosphate from alpha-D-glucosamine 6-phosphate (route II): step 2/2. The protein operates within nucleotide-sugar biosynthesis; UDP-N-acetyl-alpha-D-glucosamine biosynthesis; UDP-N-acetyl-alpha-D-glucosamine from N-acetyl-alpha-D-glucosamine 1-phosphate: step 1/1. It functions in the pathway bacterial outer membrane biogenesis; LPS lipid A biosynthesis. In terms of biological role, catalyzes the last two sequential reactions in the de novo biosynthetic pathway for UDP-N-acetylglucosamine (UDP-GlcNAc). The C-terminal domain catalyzes the transfer of acetyl group from acetyl coenzyme A to glucosamine-1-phosphate (GlcN-1-P) to produce N-acetylglucosamine-1-phosphate (GlcNAc-1-P), which is converted into UDP-GlcNAc by the transfer of uridine 5-monophosphate (from uridine 5-triphosphate), a reaction catalyzed by the N-terminal domain. The protein is Bifunctional protein GlmU of Actinobacillus pleuropneumoniae serotype 3 (strain JL03).